A 226-amino-acid chain; its full sequence is Lysoplasmalogenase TMEM86B (226 aa).

Residues 1–23 (MDARKEGLPLETLFSDQYPQVRR) are Cytoplasmic-facing. Residues 24-40 (WLAPFILACSLYFLLWI) traverse the membrane as a helical segment. Residues 41 to 46 (PVDQPS) lie on the Extracellular side of the membrane. Residues 47-68 (WVSALIKCQPILCLVVFLWAVA) form a helical membrane-spanning segment. Residues 69–74 (PGGSST) are Cytoplasmic-facing. Residues 75–93 (WLLQGALVCSAVGDACLIW) form a helical membrane-spanning segment. Residues 94–99 (PEAFFY) lie on the Extracellular side of the membrane. A helical transmembrane segment spans residues 100 to 117 (GTAAFSVAHLFYLGAFGL). Residues 118–123 (TPLQPG) are Cytoplasmic-facing. A helical transmembrane segment spans residues 124 to 140 (LLLCTTLASLTYYSFLL). Topologically, residues 141-146 (LHLEQG) are extracellular. Residues 147–163 (MVLPVMAYGLILNSMLW) form a helical membrane-spanning segment. Topologically, residues 164–171 (RSLVWGGS) are cytoplasmic. Residues 172-188 (ASWGAVLFTFSDGVLAW) traverse the membrane as a helical segment. At 189–199 (DTFVYSLPFAR) the chain is on the extracellular side. Residues 200 to 218 (LVTMSTYYAAQLLLILSAL) traverse the membrane as a helical segment. Residues 219–226 (RNPGLKTH) lie on the Cytoplasmic side of the membrane.

It belongs to the TMEM86 family. Homodimer. As to expression, enriched in liver. Also detected in brain and testis.

It localises to the endoplasmic reticulum membrane. The protein resides in the cytoplasm. It catalyses the reaction a 1-O-(1Z-alkenyl)-sn-glycero-3-phosphocholine + H2O = a 2,3-saturated aldehyde + sn-glycerol 3-phosphocholine. The enzyme catalyses a 1-O-(1Z-alkenyl)-sn-glycero-3-phosphoethanolamine + H2O = a 2,3-saturated aldehyde + sn-glycero-3-phosphoethanolamine. Competitively inhibited by lysophosphatidic acid. Catalyzes the hydrolysis of the vinyl ether bond of choline or ethanolamine lysoplasmalogens, forming fatty aldehyde and glycerophosphocholine or glycerophosphoethanolamine, respectively and is specific for the sn-2-deacylated (lyso) form of plasmalogen. In Mus musculus (Mouse), this protein is Lysoplasmalogenase TMEM86B (Tmem86b).